Reading from the N-terminus, the 317-residue chain is Peroxidase 22.3 (317 aa).

The first 25 residues, 1 to 25 (MASATNSSLSLMLLVAAAMASVASA), serve as a signal peptide directing secretion. Pyrrolidone carboxylic acid is present on glutamine 26. 2 disulfide bridges follow: cysteine 36–cysteine 111 and cysteine 69–cysteine 74. The active-site Proton acceptor is the histidine 67. Positions 68, 71, 73, 75, and 77 each coordinate Ca(2+). An N-linked (GlcNAc...) asparagine glycan is attached at asparagine 112. 2 cysteine pairs are disulfide-bonded: cysteine 117-cysteine 312 and cysteine 196-cysteine 221. Substrate is bound at residue proline 159. N-linked (GlcNAc...) asparagine glycosylation occurs at asparagine 171. Histidine 189 contributes to the heme b binding site. Threonine 190 contributes to the Ca(2+) binding site. An N-linked (GlcNAc...) asparagine glycan is attached at asparagine 205. Ca(2+) is bound by residues aspartate 236, threonine 239, and aspartate 244.

The protein belongs to the peroxidase family. Classical plant (class III) peroxidase subfamily. It depends on heme b as a cofactor. Ca(2+) serves as cofactor.

The protein localises to the secreted. The catalysed reaction is H2O2 + AH2 = A + 2 H2O. Its function is as follows. Removal of H(2)O(2), oxidation of toxic reductants, biosynthesis and degradation of lignin, suberization, auxin catabolism, response to environmental stresses such as wounding, pathogen attack and oxidative stress. These functions might be dependent on each isozyme/isoform in each plant tissue. The polypeptide is Peroxidase 22.3 (Oryza sativa subsp. japonica (Rice)).